The sequence spans 108 residues: Nucleoid-associated protein IL1848 (108 aa).

Disordered stretches follow at residues 1–26 and 88–108; these read MFKG…AQEE and KERM…KMPF. Residues 9–26 are compositionally biased toward low complexity; it reads MMKQAQQMQERMQQAQEE.

It belongs to the YbaB/EbfC family. As to quaternary structure, homodimer.

The protein resides in the cytoplasm. Its subcellular location is the nucleoid. Functionally, binds to DNA and alters its conformation. May be involved in regulation of gene expression, nucleoid organization and DNA protection. This is Nucleoid-associated protein IL1848 from Idiomarina loihiensis (strain ATCC BAA-735 / DSM 15497 / L2-TR).